A 226-amino-acid polypeptide reads, in one-letter code: Respiratory nitrate reductase 2 gamma chain (226 aa).

Residues 1–4 lie on the Periplasmic side of the membrane; it reads MIQY. Residues 5–30 form a helical membrane-spanning segment; the sequence is LNVFFYDIYPYICATVFFLGSWLRYD. Residues 31 to 48 are Cytoplasmic-facing; sequence YGQYTWRASSSQMLDKRG. Residues 49–71 form a helical membrane-spanning segment; that stretch reads MVIWSNLFHIGILGIFFGHLFGM. Heme b-binding residues include His-57 and His-67. The Periplasmic segment spans residues 72-83; that stretch reads LTPHWMYAWFLP. The chain crosses the membrane as a helical span at residues 84-113; sequence VAAKQLMAMVLGGICGVLTLIGGAGLLWRR. Topologically, residues 114-125 are cytoplasmic; the sequence is LTNQRVRATSTT. The chain crosses the membrane as a helical span at residues 126–149; it reads PDIIIMSILLIQCLLGLSTIPFSA. Residues 150–183 lie on the Periplasmic side of the membrane; sequence QYPDGSEMMKLVGWAQSIVTFRGGSSEMLNGVAF. The helical transmembrane segment at 184 to 199 threads the bilayer; it reads VFRLHLVLGMTIFLLF. Positions 188 and 206 each coordinate heme b. The Cytoplasmic segment spans residues 200–226; that stretch reads PFTRLVHVWSAPFEYFTRRYQIVRSRR.

In terms of assembly, dimer of heterotrimers each composed of an alpha, a beta and a gamma chain. Alpha and beta are catalytic chains; gamma chains are involved in binding the enzyme complex to the cytoplasmic membrane. It depends on heme as a cofactor.

The protein localises to the cell inner membrane. It carries out the reaction nitrate + a quinol = a quinone + nitrite + H2O. This is a second nitrate reductase enzyme which can substitute for the NRA enzyme and allows E.coli to use nitrate as an electron acceptor during anaerobic growth. The gamma chain is a membrane-embedded heme-iron unit resembling cytochrome b, which transfers electrons from quinones to the beta subunit. The protein is Respiratory nitrate reductase 2 gamma chain (narV) of Escherichia coli (strain K12).